Here is a 168-residue protein sequence, read N- to C-terminus: Phosphopantetheine adenylyltransferase (168 aa).

Thr-9 is a substrate binding site. Residues 9–10 (TF) and His-17 each bind ATP. Residues Lys-41, Leu-73, and Arg-87 each contribute to the substrate site. Residues 88-90 (GLR), Glu-98, and 123-129 (YQFISGT) each bind ATP.

This sequence belongs to the bacterial CoaD family. As to quaternary structure, homohexamer. Mg(2+) serves as cofactor.

It localises to the cytoplasm. It catalyses the reaction (R)-4'-phosphopantetheine + ATP + H(+) = 3'-dephospho-CoA + diphosphate. The protein operates within cofactor biosynthesis; coenzyme A biosynthesis; CoA from (R)-pantothenate: step 4/5. In terms of biological role, reversibly transfers an adenylyl group from ATP to 4'-phosphopantetheine, yielding dephospho-CoA (dPCoA) and pyrophosphate. The chain is Phosphopantetheine adenylyltransferase from Paraburkholderia phymatum (strain DSM 17167 / CIP 108236 / LMG 21445 / STM815) (Burkholderia phymatum).